The primary structure comprises 366 residues: Isocitrate dehydrogenase [NAD] subunit alpha, mitochondrial (366 aa).

Residues 1-27 (MAGPAWISKVSRLLGAFHNPKQVTRGF) constitute a mitochondrion transit peptide. Residue Lys77 is modified to N6-succinyllysine. Thr101 is subject to Phosphothreonine. Residues Arg115, Arg125, and Arg146 each coordinate substrate. Residue Lys223 is modified to N6-acetyllysine. Positions 233, 257, and 261 each coordinate Mg(2+). Residue Lys343 is modified to N6-acetyllysine; alternate. Lys343 bears the N6-succinyllysine; alternate mark. Lys350 bears the N6-succinyllysine mark.

It belongs to the isocitrate and isopropylmalate dehydrogenases family. In terms of assembly, heterooligomer of subunits alpha (IDH3A), beta (IDH3B), and gamma (IDH3G) in the apparent ratio of 2:1:1. The heterodimer containing one IDH3A and one IDH3B subunit and the heterodimer containing one IDH3A and one IDH3G subunit assemble into a heterotetramer (which contains two subunits of IDH3A, one of IDH3B and one of IDH3G) and further into the heterooctamer. Requires Mg(2+) as cofactor. Mn(2+) is required as a cofactor.

Its subcellular location is the mitochondrion. The enzyme catalyses D-threo-isocitrate + NAD(+) = 2-oxoglutarate + CO2 + NADH. With respect to regulation, the heterotetramer and the heterodimer composed of IDH3A and IDH3G subunits can be allosterically activated by citrate (CIT) or/and ADP, and the two activators can act independently or synergistically. The heterodimer composed of IDH3A and IDH3B subunits cannot be allosterically regulated and the allosteric regulation of the heterotetramer is through the IDH3G subunit and not the IDH3B subunit. The IDH3G subunit contains the allosteric site which consists of a CIT-binding site and an ADP-binding site, and the binding of CIT and ADP causes conformational changes at the allosteric site which are transmitted to the active site in the catalytic subunit (IDH3A) through a cascade of conformational changes at the heterodimer interface, leading to stabilization of the isocitrate-binding at the active site and thus activation of the enzyme. ATP can activate the heterotetramer and the heterodimer composed of IDH3A and IDH3G subunits at low concentrations but inhibits their activities at high concentrations, whereas ATP exhibits only inhibitory effect on the heterodimer composed of IDH3A and IDH3B subunits. Catalytic subunit of the enzyme which catalyzes the decarboxylation of isocitrate (ICT) into alpha-ketoglutarate. The heterodimer composed of the alpha (IDH3A) and beta (IDH3B) subunits and the heterodimer composed of the alpha (IDH3A) and gamma (IDH3G) subunits, have considerable basal activity but the full activity of the heterotetramer (containing two subunits of IDH3A, one of IDH3B and one of IDH3G) requires the assembly and cooperative function of both heterodimers. This is Isocitrate dehydrogenase [NAD] subunit alpha, mitochondrial from Pongo abelii (Sumatran orangutan).